The sequence spans 328 residues: MHTLIERLEKVTNSKELEEARLSALGKKGVFADKFNQLKNLNGEEKNAFAKEIHHYKQAFEKAFELKKKAILELELEERLKKEKIDVSLFNAIKTSSSHPLNHTKNKIIEFFTPLGYKLEIGSLVEDDFHNFSALNLPPYHPARDMQDTFYFKDHKLLRTHTSPVQIHTMQEQTPPIKMICLGETFRRDYDLTHTPMFHQIEGLVVDQKGNIRFTHLKGVIEDFLHYFFGGVKLRWRSSFFPFTEPSAEVDISCVFCKQEGCRVCSHTGWLEVLGCGMVNNAVFEAIGYENVSGFAFGMGIERLAMLTCQINDLRSFFETDLRVLESF.

A Mg(2+)-binding site is contributed by Glu-245.

This sequence belongs to the class-II aminoacyl-tRNA synthetase family. Phe-tRNA synthetase alpha subunit type 1 subfamily. In terms of assembly, tetramer of two alpha and two beta subunits. Requires Mg(2+) as cofactor.

It is found in the cytoplasm. The enzyme catalyses tRNA(Phe) + L-phenylalanine + ATP = L-phenylalanyl-tRNA(Phe) + AMP + diphosphate + H(+). The protein is Phenylalanine--tRNA ligase alpha subunit of Helicobacter pylori (strain Shi470).